A 333-amino-acid chain; its full sequence is Fe(3+)-citrate import system permease protein YfmE (333 aa).

A run of 8 helical transmembrane segments spans residues 12–32 (LLAILILAVILIVLSVISIGI), 65–85 (IILAILAGAGLAAAGAILQGV), 95–115 (VVGISKGSGLAAMAVILIFPE), 120–140 (VLPFSAFAGAAIIAVLLLMIA), 194–214 (EVKLLAPWLLILFPIVCILIP), 238–258 (FILIFTAVALAGSCVAVVGSI), 279–299 (YLLPASALIGAIILLIADTLG), and 306–326 (VEIPAGILTAVIGAPYFLYLL).

It belongs to the binding-protein-dependent transport system permease family. FecCD subfamily. As to quaternary structure, the complex is composed of one ATP-binding protein (YfmF), two transmembrane proteins (YfmD and YfmE) and a solute-binding protein (YfmC).

It is found in the cell membrane. Its function is as follows. Part of the ABC transporter complex YfmCDEF involved in citrate-dependent Fe(3+) import. Involved in the translocation of the substrate across the membrane. This chain is Fe(3+)-citrate import system permease protein YfmE (yfmE), found in Bacillus subtilis (strain 168).